The sequence spans 117 residues: Larval cuticle protein A2B (117 aa).

Copy 1 of the repeat occupies 12–15; that stretch reads AAPV. The Chitin-binding type R&amp;R domain maps to 29-95; it reads HPQYQYGYDV…AVVHREPLVA (67 aa). The stretch at 108 to 111 is repeat 2; sequence AAPV.

Functionally, component of the cuticle of the larva of Tenebrio molitor. The chain is Larval cuticle protein A2B from Tenebrio molitor (Yellow mealworm beetle).